The following is a 348-amino-acid chain: Eukaryotic translation initiation factor 3 subunit F (348 aa).

The MPN domain maps to 30–166 (VVIQPQAIFS…TRTYISAPVG (137 aa)). Residues 312–327 (STAIGGTGAESGGQRG) are compositionally biased toward gly residues. The disordered stretch occupies residues 312-348 (STAIGGTGAESGGQRGGQRNNRQRGGQQRNQAEELRA). Low complexity predominate over residues 328-341 (GQRNNRQRGGQQRN).

It belongs to the eIF-3 subunit F family. As to quaternary structure, component of the eukaryotic translation initiation factor 3 (eIF-3) complex.

It localises to the cytoplasm. In terms of biological role, component of the eukaryotic translation initiation factor 3 (eIF-3) complex, which is involved in protein synthesis of a specialized repertoire of mRNAs and, together with other initiation factors, stimulates binding of mRNA and methionyl-tRNAi to the 40S ribosome. The eIF-3 complex specifically targets and initiates translation of a subset of mRNAs involved in cell proliferation. This chain is Eukaryotic translation initiation factor 3 subunit F, found in Coccidioides immitis (strain RS) (Valley fever fungus).